The sequence spans 348 residues: Dihydroorotase (348 aa).

The Zn(2+) site is built by histidine 17 and histidine 19. Substrate is bound by residues 19 to 21 (HLR) and asparagine 45. Positions 103, 140, and 178 each coordinate Zn(2+). An N6-carboxylysine modification is found at lysine 103. Residue histidine 140 coordinates substrate. Residue leucine 223 coordinates substrate. A Zn(2+)-binding site is contributed by aspartate 251. Aspartate 251 is an active-site residue. Histidine 255 and alanine 267 together coordinate substrate.

The protein belongs to the metallo-dependent hydrolases superfamily. DHOase family. Class II DHOase subfamily. In terms of assembly, homodimer. It depends on Zn(2+) as a cofactor.

The enzyme catalyses (S)-dihydroorotate + H2O = N-carbamoyl-L-aspartate + H(+). It functions in the pathway pyrimidine metabolism; UMP biosynthesis via de novo pathway; (S)-dihydroorotate from bicarbonate: step 3/3. Catalyzes the reversible cyclization of carbamoyl aspartate to dihydroorotate. This Salmonella paratyphi C (strain RKS4594) protein is Dihydroorotase.